The sequence spans 254 residues: Alcohol dehydrogenase (254 aa).

10–33 contacts NAD(+); sequence FVAGLGGIGLDTSRELVKRDLKNL. Ser138 is a substrate binding site. Catalysis depends on Tyr151, which acts as the Proton acceptor.

Belongs to the short-chain dehydrogenases/reductases (SDR) family. Homodimer.

It catalyses the reaction a primary alcohol + NAD(+) = an aldehyde + NADH + H(+). It carries out the reaction a secondary alcohol + NAD(+) = a ketone + NADH + H(+). The sequence is that of Alcohol dehydrogenase (Adh) from Drosophila guanche (Fruit fly).